A 378-amino-acid polypeptide reads, in one-letter code: Succinyl-diaminopimelate desuccinylase (378 aa).

Residue H68 coordinates Zn(2+). Residue D70 is part of the active site. Zn(2+) is bound at residue D101. E135 serves as the catalytic Proton acceptor. Zn(2+)-binding residues include E136, E164, and H350.

The protein belongs to the peptidase M20A family. DapE subfamily. As to quaternary structure, homodimer. The cofactor is Zn(2+). Co(2+) serves as cofactor.

The enzyme catalyses N-succinyl-(2S,6S)-2,6-diaminopimelate + H2O = (2S,6S)-2,6-diaminopimelate + succinate. Its pathway is amino-acid biosynthesis; L-lysine biosynthesis via DAP pathway; LL-2,6-diaminopimelate from (S)-tetrahydrodipicolinate (succinylase route): step 3/3. In terms of biological role, catalyzes the hydrolysis of N-succinyl-L,L-diaminopimelic acid (SDAP), forming succinate and LL-2,6-diaminopimelate (DAP), an intermediate involved in the bacterial biosynthesis of lysine and meso-diaminopimelic acid, an essential component of bacterial cell walls. The protein is Succinyl-diaminopimelate desuccinylase of Vibrio campbellii (strain ATCC BAA-1116).